The sequence spans 220 residues: Thioredoxin domain-containing protein (220 aa).

The first 19 residues, 1–19 (MKFLILNCLILFSLISSEA), serve as a signal peptide directing secretion. The region spanning 20–141 (TNVKLDREDQ…SEFALGDFKN (122 aa)) is the Thioredoxin domain. Residues 20–181 (TNVKLDREDQ…YDAALAGFVT (162 aa)) are Lumenal-facing. An intrachain disulfide couples cysteine 64 to cysteine 67. A helical transmembrane segment spans residues 182 to 202 (ISSFSFLFGLLVGLMLSLFLF). The Cytoplasmic segment spans residues 203 to 220 (TRRATRKPKVLTERKKDK). The short motif at 217-220 (KKDK) is the Di-lysine motif element.

It belongs to the protein disulfide isomerase family.

It is found in the endoplasmic reticulum membrane. This Theileria parva (East coast fever infection agent) protein is Thioredoxin domain-containing protein.